The sequence spans 331 residues: 5,10-methylenetetrahydromethanopterin reductase (331 aa).

It belongs to the mer family.

Its subcellular location is the cytoplasm. The enzyme catalyses 5-methyl-5,6,7,8-tetrahydromethanopterin + oxidized coenzyme F420-(gamma-L-Glu)(n) + H(+) = 5,10-methylenetetrahydromethanopterin + reduced coenzyme F420-(gamma-L-Glu)(n). It participates in one-carbon metabolism; methanogenesis from CO(2); methyl-coenzyme M from 5,10-methylene-5,6,7,8-tetrahydromethanopterin: step 1/2. Catalyzes the reversible reduction of methylene-H(4)MPT to methyl-H(4)MPT. This chain is 5,10-methylenetetrahydromethanopterin reductase, found in Methanocaldococcus jannaschii (strain ATCC 43067 / DSM 2661 / JAL-1 / JCM 10045 / NBRC 100440) (Methanococcus jannaschii).